Here is a 117-residue protein sequence, read N- to C-terminus: MDKKTARLSRSKRTRIKLRELGHTRLCVYRTPRHVYAQVISGDGSTVLVAASTVEKDVKAKCKYTGNVESAAIVGEIIADRCKEKGISQVAFDRSGYKYHGRVKALVEAAREHGLQF.

It belongs to the universal ribosomal protein uL18 family. As to quaternary structure, part of the 50S ribosomal subunit; part of the 5S rRNA/L5/L18/L25 subcomplex. Contacts the 5S and 23S rRNAs.

This is one of the proteins that bind and probably mediate the attachment of the 5S RNA into the large ribosomal subunit, where it forms part of the central protuberance. This Francisella tularensis subsp. tularensis (strain FSC 198) protein is Large ribosomal subunit protein uL18.